Consider the following 459-residue polypeptide: MPAPSTTLLIEGSFSELAEEFAAYLDALNKPDDTTVQTEVAPLLQPLREQEQNDTQLDQSKRDEVLKKLVSAATVLNTAPEKEITPAYNLLIHLVQQASDPDMFLSRICSYLAKPIPSSPQFGASLSIAILSTIFNTLAPTDSSRFHVLLAIVTVIRQSGSSAAFDALKPQLTAQLPNWRSTWELDDEEARRLHLAIADAAQAAGDLDWAQTHVVDALQTIPPAEASSPAARDLAVRALTSALTHPAVFDFTPLTAADAVQALRSSDAPLFELLEIFTADTLDAYEDFISATPVENILPDNALAPHAEALQTKIRLLTLASLAAAATTTTGPSARSLSYETIASALRVPQEEVEKWVIDTIRAGLVEGKLSQLRSEFLVHRATYRVFGEKQWAEVQGRLMVWRRSLENVLGVIRSERERFVREAAAAAAAAAAEGEKGDKNNKGPSERRRAPQEIAAAE.

The 178-residue stretch at 207–384 folds into the PCI domain; that stretch reads LDWAQTHVVD…SEFLVHRATY (178 aa). The interval 431 to 459 is disordered; sequence AAAEGEKGDKNNKGPSERRRAPQEIAAAE. Residues 434–452 are compositionally biased toward basic and acidic residues; sequence EGEKGDKNNKGPSERRRAP.

The protein belongs to the eIF-3 subunit M family. Component of the eukaryotic translation initiation factor 3 (eIF-3) complex.

Its subcellular location is the cytoplasm. Its function is as follows. Component of the eukaryotic translation initiation factor 3 (eIF-3) complex, which is involved in protein synthesis of a specialized repertoire of mRNAs and, together with other initiation factors, stimulates binding of mRNA and methionyl-tRNAi to the 40S ribosome. The eIF-3 complex specifically targets and initiates translation of a subset of mRNAs involved in cell proliferation. The protein is Eukaryotic translation initiation factor 3 subunit M of Emericella nidulans (strain FGSC A4 / ATCC 38163 / CBS 112.46 / NRRL 194 / M139) (Aspergillus nidulans).